A 152-amino-acid polypeptide reads, in one-letter code: Small ribosomal subunit protein uS8m (152 aa).

It belongs to the universal ribosomal protein uS8 family.

Its subcellular location is the mitochondrion. The sequence is that of Small ribosomal subunit protein uS8m (RPS8) from Marchantia polymorpha (Common liverwort).